Reading from the N-terminus, the 340-residue chain is CRISPR system Cmr subunit Cmr6 (340 aa).

This sequence belongs to the CRISPR system Cmr6 family. In terms of assembly, part of the type III-B Cmr ribonucleoprotein (RNP) complex, an elongated RNP with Cmr2 and Cmr3 as the base, with Cmr4 and Cmr5 forming a helical core along the mature crRNA (39 or 45 nt in length), while the complex is capped by Cmr6 and Cmr1. The 5' end of the crRNA is bound to Cmr2 and Cmr3, while Cmr6 and a Cmr1 subunit (Cmr1-1 or Cmr1-2) cap the 3' end of the crRNA. The target RNA lies antiparallel to the crRNA, with its 5' end near Cmr1 and Cmr6 and its 3' end near Cmr2 and Cmr3; major target cleavage occurs nears the junction of Cmr1/Cmr6 and Cmr4/Cmr, with minor cleavage occurring at 6 nt intervals which coincide with the proposed spacing of Cmr4 subunits. Interacts with Cmr4 and Cmr5.

It localises to the cytoplasm. Its function is as follows. CRISPR (clustered regularly interspaced short palindromic repeat), is an adaptive immune system that provides protection against mobile genetic elements (viruses, transposable elements and conjugative plasmids). CRISPR clusters contain sequences complementary to antecedent mobile elements and target invading nucleic acids. CRISPR clusters are transcribed and processed into CRISPR RNA (crRNA), formerly called psiRNA (prokaryotic silencing) in this organism. Part of the Cmr ribonucleoprotein complex which has divalent cation-dependent endoribonuclease activity specific for ssRNA complementary to the crRNA (target RNA), generating 5' hydroxy- and 3' phosphate or 2'-3' cyclic phosphate termini. Cmr4 is probably the subunit that cleaves target RNA. Cmr complex does not cleave ssDNA complementary to the crRNA. Cleavage of invading RNA is guided by the crRNA; substrate cleavage occurs a fixed distance (14 nt) from the 3' end of the crRNA. In vitro reconstitution shows Cmr1-2 and Cmr5 are not absolutely necessary for target cleavage. This is CRISPR system Cmr subunit Cmr6 from Pyrococcus furiosus (strain ATCC 43587 / DSM 3638 / JCM 8422 / Vc1).